A 134-amino-acid chain; its full sequence is Interleukin-5 (134 aa).

The signal sequence occupies residues M1 to A21. N76 and N90 each carry an N-linked (GlcNAc...) asparagine glycan.

It belongs to the IL-5 family. Homodimer; disulfide-linked. Interacts with IL5RA. Interacts with CSF2RB.

Its subcellular location is the secreted. Functionally, homodimeric cytokine expressed predominantly by T-lymphocytes and NK cells that plays an important role in the survival, differentiation, and chemotaxis of eosinophils. Also acts on activated and resting B-cells to induce immunoglobulin production, growth, and differentiation. Mechanistically, exerts its biological effects through a receptor composed of IL5RA subunit and the cytokine receptor common subunit beta/CSF2RB. Binding to the receptor leads to activation of various kinases including LYN, SYK and JAK2 and thereby propagates signals through the RAS-MAPK and JAK-STAT5 pathways respectively. The sequence is that of Interleukin-5 (IL5) from Canis lupus familiaris (Dog).